Here is a 226-residue protein sequence, read N- to C-terminus: UPF0173 metal-dependent hydrolase GWCH70_2696 (226 aa).

This sequence belongs to the UPF0173 family.

This chain is UPF0173 metal-dependent hydrolase GWCH70_2696, found in Geobacillus sp. (strain WCH70).